A 130-amino-acid chain; its full sequence is C-X-C motif chemokine 5 (130 aa).

Positions 1–37 are cleaved as a signal peptide; sequence MSFQLRSSARIPSRSCSSFTLLAFLLLFTLPQHRAQA. 2 disulfide bridges follow: cysteine 50–cysteine 76 and cysteine 52–cysteine 93.

Belongs to the intercrine alpha (chemokine CxC) family. Monomer. Homodimer.

The protein resides in the secreted. In terms of biological role, may participate in the recruitment of inflammatory cells by injured or infected tissue. This is C-X-C motif chemokine 5 (Cxcl5) from Rattus norvegicus (Rat).